We begin with the raw amino-acid sequence, 221 residues long: Glutathione S-transferase alpha-3 (221 aa).

A GST N-terminal domain is found at 3–83 (GKPVLHYFDG…YIATKYNLYG (81 aa)). N6-succinyllysine is present on Lys-4. Residues Tyr-9, Arg-45, 54–55 (QV), and 67–68 (QT) contribute to the glutathione site. Residues 85 to 207 (DMKERALIDM…LQPGSQRKPL (123 aa)) form the GST C-terminal domain.

Belongs to the GST superfamily. Alpha family. As to quaternary structure, heterodimer of YC1 and YC2.

The protein resides in the cytoplasm. It carries out the reaction RX + glutathione = an S-substituted glutathione + a halide anion + H(+). It catalyses the reaction androst-5-ene-3,17-dione = androst-4-ene-3,17-dione. The enzyme catalyses pregn-5-ene-3,20-dione = progesterone. Functionally, conjugation of reduced glutathione to a wide number of exogenous and endogenous hydrophobic electrophiles. Catalyzes isomerization reactions that contribute to the biosynthesis of steroid hormones. Efficiently catalyze obligatory double-bond isomerizations of delta(5)-androstene-3,17-dione and delta(5)-pregnene-3,20-dione, precursors to testosterone and progesterone, respectively. Has substantial activity toward aflatoxin B1-8,9-epoxide. This chain is Glutathione S-transferase alpha-3, found in Rattus norvegicus (Rat).